The primary structure comprises 523 residues: Cytochrome P450 52A3-A (523 aa).

A helical transmembrane segment spans residues 17–34 (WYTILFGAAVTYFLSIAL). Cys471 lines the heme pocket.

This sequence belongs to the cytochrome P450 family. Requires heme as cofactor.

The protein localises to the membrane. Together with an NADPH cytochrome P450 the enzyme system catalyzes the terminal hydroxylation as the first step in the assimilation of alkanes and fatty acids. This is Cytochrome P450 52A3-A (CYP52A3-A) from Candida maltosa (Yeast).